Here is a 90-residue protein sequence, read N- to C-terminus: Probable Fe(2+)-trafficking protein (90 aa).

The protein belongs to the Fe(2+)-trafficking protein family.

Could be a mediator in iron transactions between iron acquisition and iron-requiring processes, such as synthesis and/or repair of Fe-S clusters in biosynthetic enzymes. This chain is Probable Fe(2+)-trafficking protein, found in Pseudomonas syringae pv. tomato (strain ATCC BAA-871 / DC3000).